The following is a 93-amino-acid chain: MPRSLKKGPFIDDHLLKKVVKAQESGDRKVIQTWSRRSTIIPEMVGLTFAVHNGRKFIPVFVTENMVGHKLGEFSPTRTYYGHAADKKSKAKR.

It belongs to the universal ribosomal protein uS19 family.

Protein S19 forms a complex with S13 that binds strongly to the 16S ribosomal RNA. The polypeptide is Small ribosomal subunit protein uS19 (Maridesulfovibrio salexigens (strain ATCC 14822 / DSM 2638 / NCIMB 8403 / VKM B-1763) (Desulfovibrio salexigens)).